Consider the following 502-residue polypeptide: Cardiolipin synthase (502 aa).

Helical transmembrane passes span 7-27, 29-49, and 59-79; these read VAIL…FWEG, LLGL…LVIS, and IAWL…YLLF. PLD phosphodiesterase domains lie at 237–264 and 415–442; these read INFR…GDEY and EKGF…DMRS. Catalysis depends on residues His242, Lys244, Asp249, His420, Lys422, and Asp427.

This sequence belongs to the phospholipase D family. Cardiolipin synthase subfamily.

It is found in the cell membrane. It catalyses the reaction 2 a 1,2-diacyl-sn-glycero-3-phospho-(1'-sn-glycerol) = a cardiolipin + glycerol. Functionally, catalyzes the reversible phosphatidyl group transfer from one phosphatidylglycerol molecule to another to form cardiolipin (CL) (diphosphatidylglycerol) and glycerol. This Geobacillus kaustophilus (strain HTA426) protein is Cardiolipin synthase (cls).